A 505-amino-acid polypeptide reads, in one-letter code: Flagellin (505 aa).

Belongs to the bacterial flagellin family.

The protein resides in the secreted. The protein localises to the bacterial flagellum. Its function is as follows. Flagellin is the subunit protein which polymerizes to form the filaments of bacterial flagella. This Salmonella budapest protein is Flagellin (fliC).